Consider the following 719-residue polypeptide: Polyribonucleotide nucleotidyltransferase (719 aa).

Residues aspartate 487 and aspartate 493 each contribute to the Mg(2+) site. A KH domain is found at proline 554–isoleucine 613. An S1 motif domain is found at glycine 623–lysine 691. The interval lysine 691 to glutamate 719 is disordered. Residues leucine 701–glutamate 719 are compositionally biased toward basic and acidic residues.

This sequence belongs to the polyribonucleotide nucleotidyltransferase family. Requires Mg(2+) as cofactor.

The protein localises to the cytoplasm. The catalysed reaction is RNA(n+1) + phosphate = RNA(n) + a ribonucleoside 5'-diphosphate. Involved in mRNA degradation. Catalyzes the phosphorolysis of single-stranded polyribonucleotides processively in the 3'- to 5'-direction. This chain is Polyribonucleotide nucleotidyltransferase, found in Bradyrhizobium sp. (strain ORS 278).